A 514-amino-acid polypeptide reads, in one-letter code: GMP synthase [glutamine-hydrolyzing] (514 aa).

A Glutamine amidotransferase type-1 domain is found at 9 to 199 (KIIVLDFGSQ…ALNVCGCKGD (191 aa)). Catalysis depends on C86, which acts as the Nucleophile. Residues H173 and E175 contribute to the active site. Residues 200–389 (WTMENFSEVE…LGMPDAIVWR (190 aa)) form the GMPS ATP-PPase domain. 227 to 233 (SGGVDSS) is an ATP binding site.

Homodimer.

It carries out the reaction XMP + L-glutamine + ATP + H2O = GMP + L-glutamate + AMP + diphosphate + 2 H(+). It participates in purine metabolism; GMP biosynthesis; GMP from XMP (L-Gln route): step 1/1. In terms of biological role, catalyzes the synthesis of GMP from XMP. The sequence is that of GMP synthase [glutamine-hydrolyzing] from Listeria monocytogenes serotype 4b (strain F2365).